Here is a 361-residue protein sequence, read N- to C-terminus: Chorismate synthase (361 aa).

NADP(+) is bound by residues R48 and R54. Residues 125-127, 238-239, G278, 293-297, and R319 contribute to the FMN site; these read RSS, NA, and KPTSS.

The protein belongs to the chorismate synthase family. Homotetramer. The cofactor is FMNH2.

The catalysed reaction is 5-O-(1-carboxyvinyl)-3-phosphoshikimate = chorismate + phosphate. Its pathway is metabolic intermediate biosynthesis; chorismate biosynthesis; chorismate from D-erythrose 4-phosphate and phosphoenolpyruvate: step 7/7. In terms of biological role, catalyzes the anti-1,4-elimination of the C-3 phosphate and the C-6 proR hydrogen from 5-enolpyruvylshikimate-3-phosphate (EPSP) to yield chorismate, which is the branch point compound that serves as the starting substrate for the three terminal pathways of aromatic amino acid biosynthesis. This reaction introduces a second double bond into the aromatic ring system. This is Chorismate synthase from Yersinia enterocolitica serotype O:8 / biotype 1B (strain NCTC 13174 / 8081).